The following is a 381-amino-acid chain: ATP synthase subunit a (381 aa).

Positions 24 to 73 (PVAAPVEQHGQAPEAAPDAHGSPAGEPGAAVEAHAAAAEHGEAAGHEGGH) are disordered. Low complexity predominate over residues 47-59 (AGEPGAAVEAHAA). Basic and acidic residues predominate over residues 60–73 (AAEHGEAAGHEGGH). Transmembrane regions (helical) follow at residues 128–148 (KHVVMMWLASALLLVVVLGAV), 190–210 (LVTAFFFILFLNLFGLLPFSA), 215–235 (NLSVTVAMALFTFVITQYAAI), 255–275 (LAPLWLIMIPVEFLGLFTKPF), 290–310 (FVILALLGLIFALGTPWVAFG), and 316–336 (LSIFLLELFVAFVQAYIFTML). Over residues 351 to 360 (DHGHAEEHGH) the composition is skewed to basic and acidic residues. Residues 351-381 (DHGHAEEHGHAGPAAGSEHGSHVAGASPGHG) form a disordered region.

Belongs to the ATPase A chain family. F-type ATPases have 2 components, CF(1) - the catalytic core - and CF(0) - the membrane proton channel. CF(1) has five subunits: alpha(3), beta(3), gamma(1), delta(1), epsilon(1). CF(0) has three main subunits: a(1), b(2) and c(9-12). The alpha and beta chains form an alternating ring which encloses part of the gamma chain. CF(1) is attached to CF(0) by a central stalk formed by the gamma and epsilon chains, while a peripheral stalk is formed by the delta and b chains.

The protein resides in the cell inner membrane. Functionally, key component of the proton channel; it plays a direct role in the translocation of protons across the membrane. This is ATP synthase subunit a from Anaeromyxobacter dehalogenans (strain 2CP-C).